A 338-amino-acid polypeptide reads, in one-letter code: Phosphoribosylformylglycinamidine cyclo-ligase (338 aa).

The protein belongs to the AIR synthase family.

It is found in the cytoplasm. The catalysed reaction is 2-formamido-N(1)-(5-O-phospho-beta-D-ribosyl)acetamidine + ATP = 5-amino-1-(5-phospho-beta-D-ribosyl)imidazole + ADP + phosphate + H(+). It participates in purine metabolism; IMP biosynthesis via de novo pathway; 5-amino-1-(5-phospho-D-ribosyl)imidazole from N(2)-formyl-N(1)-(5-phospho-D-ribosyl)glycinamide: step 2/2. The sequence is that of Phosphoribosylformylglycinamidine cyclo-ligase from Thermoplasma volcanium (strain ATCC 51530 / DSM 4299 / JCM 9571 / NBRC 15438 / GSS1).